The chain runs to 525 residues: Ribosomal protein S6 kinase beta-1 (525 aa).

The tract at residues M1–M54 is disordered. The short motif at F28–L32 is the TOS motif element. Acidic residues predominate over residues I30–E46. The Protein kinase domain occupies F91 to F352. ATP contacts are provided by residues L97–V105 and K123. D218 serves as the catalytic Proton acceptor. Position 252 is a phosphothreonine; by PDPK1 (T252). Residues R353–K423 form the AGC-kinase C-terminal domain. The segment at S380–T399 is disordered. The segment covering Q381–T399 has biased composition (polar residues). S394 carries the phosphoserine modification. T412 bears the Phosphothreonine; by MTOR, NEK6 and NEK7 mark. The segment at E424–L525 is autoinhibitory domain. Residues S434 and S441 each carry the phosphoserine modification. Position 444 is a phosphothreonine (T444). A phosphoserine mark is found at S447 and S452. Position 516 is an N6-acetyllysine (K516).

The protein belongs to the protein kinase superfamily. AGC Ser/Thr protein kinase family. S6 kinase subfamily. As to quaternary structure, interacts with PPP1R9A/neurabin-1. Interacts with RPTOR. Interacts with IRS1. Interacts with EIF3B and EIF3C. Interacts with TRAF4. Interacts with POLDIP3. Interacts (via N-terminus) with IER5. (Microbial infection) Interacts with Mumps virus phosphoprotein; this interaction may play a role in the viral replication and transcription. Post-translationally, phosphorylation at Thr-412 is regulated by mTORC1. The phosphorylation at this site is maintained by an agonist-dependent autophosphorylation mechanism. Activated by phosphorylation at Thr-252 by PDPK1. Dephosphorylation by PPP1CC at Thr-412 in mitochondrion. Widely expressed.

Its subcellular location is the synapse. It is found in the synaptosome. The protein resides in the mitochondrion outer membrane. The protein localises to the mitochondrion. It localises to the nucleus. Its subcellular location is the cytoplasm. It catalyses the reaction L-seryl-[protein] + ATP = O-phospho-L-seryl-[protein] + ADP + H(+). The enzyme catalyses L-threonyl-[protein] + ATP = O-phospho-L-threonyl-[protein] + ADP + H(+). Activation requires multiple phosphorylation events on serine/threonine residues. Activation appears to be first mediated by phosphorylation of multiple sites in the autoinhibitory domain, which facilitates phosphorylation at Thr-412, disrupting the autoinhibitory mechanism and allowing phosphorylation of Thr-252 by PDPK1. The active conformation of the kinase is believed to be stabilized by a mechanism involving three conserved phosphorylation sites located in the kinase domain activation loop (Thr-252) and in the AGC-kinase C-terminal domain (Ser-394 in the middle of the tail/linker region and Thr-412 within a hydrophobic motif at its end). Activated by mTORC1; isoform Alpha I and isoform Alpha II are sensitive to rapamycin, which inhibits activating phosphorylation at Thr-412. Activated by PDPK1. Functionally, serine/threonine-protein kinase that acts downstream of mTOR signaling in response to growth factors and nutrients to promote cell proliferation, cell growth and cell cycle progression. Regulates protein synthesis through phosphorylation of EIF4B, RPS6 and EEF2K, and contributes to cell survival by repressing the pro-apoptotic function of BAD. Under conditions of nutrient depletion, the inactive form associates with the EIF3 translation initiation complex. Upon mitogenic stimulation, phosphorylation by the mechanistic target of rapamycin complex 1 (mTORC1) leads to dissociation from the EIF3 complex and activation. The active form then phosphorylates and activates several substrates in the pre-initiation complex, including the EIF2B complex and the cap-binding complex component EIF4B. Also controls translation initiation by phosphorylating a negative regulator of EIF4A, PDCD4, targeting it for ubiquitination and subsequent proteolysis. Promotes initiation of the pioneer round of protein synthesis by phosphorylating POLDIP3/SKAR. In response to IGF1, activates translation elongation by phosphorylating EEF2 kinase (EEF2K), which leads to its inhibition and thus activation of EEF2. Also plays a role in feedback regulation of mTORC2 by mTORC1 by phosphorylating MAPKAP1/SIN1, MTOR and RICTOR, resulting in the inhibition of mTORC2 and AKT1 signaling. Also involved in feedback regulation of mTORC1 and mTORC2 by phosphorylating DEPTOR. Mediates cell survival by phosphorylating the pro-apoptotic protein BAD and suppressing its pro-apoptotic function. Phosphorylates mitochondrial URI1 leading to dissociation of a URI1-PPP1CC complex. The free mitochondrial PPP1CC can then dephosphorylate RPS6KB1 at Thr-412, which is proposed to be a negative feedback mechanism for the RPS6KB1 anti-apoptotic function. Mediates TNF-alpha-induced insulin resistance by phosphorylating IRS1 at multiple serine residues, resulting in accelerated degradation of IRS1. In cells lacking functional TSC1-2 complex, constitutively phosphorylates and inhibits GSK3B. May be involved in cytoskeletal rearrangement through binding to neurabin. Phosphorylates and activates the pyrimidine biosynthesis enzyme CAD, downstream of MTOR. Following activation by mTORC1, phosphorylates EPRS and thereby plays a key role in fatty acid uptake by adipocytes and also most probably in interferon-gamma-induced translation inhibition. The polypeptide is Ribosomal protein S6 kinase beta-1 (RPS6KB1) (Homo sapiens (Human)).